Here is a 518-residue protein sequence, read N- to C-terminus: uncharacterized protein (518 aa).

The protein localises to the virion. This is an uncharacterized protein from Acanthamoeba polyphaga (Amoeba).